The following is a 151-amino-acid chain: Flavodoxin YqcA (151 aa).

A Flavodoxin-like domain is found at 4 to 145 (IGIFVGTVYG…ISCPWVEAWA (142 aa)). FMN is bound by residues 10–15 (TVYGNA) and 99–101 (NFC).

The protein belongs to the flavodoxin family. MioC subfamily. Monomer. Requires FMN as cofactor.

Probable electron transporter. This Pectobacterium carotovorum subsp. carotovorum (Erwinia carotovora subsp. carotovora) protein is Flavodoxin YqcA.